We begin with the raw amino-acid sequence, 473 residues long: Adenosylhomocysteinase (473 aa).

Substrate contacts are provided by Thr60, Asp135, and Glu197. Residue 198 to 200 (TTT) coordinates NAD(+). Substrate is bound by residues Lys227 and Asp231. Residues Asn232, 261-266 (GFGDVG), Glu284, Asn319, 340-342 (IGH), and Asn385 contribute to the NAD(+) site.

Belongs to the adenosylhomocysteinase family. Requires NAD(+) as cofactor.

It is found in the cytoplasm. The catalysed reaction is S-adenosyl-L-homocysteine + H2O = L-homocysteine + adenosine. It functions in the pathway amino-acid biosynthesis; L-homocysteine biosynthesis; L-homocysteine from S-adenosyl-L-homocysteine: step 1/1. In terms of biological role, may play a key role in the regulation of the intracellular concentration of adenosylhomocysteine. The sequence is that of Adenosylhomocysteinase from Bradyrhizobium diazoefficiens (strain JCM 10833 / BCRC 13528 / IAM 13628 / NBRC 14792 / USDA 110).